A 293-amino-acid polypeptide reads, in one-letter code: Pyridoxal 5'-phosphate synthase subunit PdxS (293 aa).

Position 23 (Asp-23) interacts with D-ribose 5-phosphate. The active-site Schiff-base intermediate with D-ribose 5-phosphate is the Lys-80. Gly-152 contacts D-ribose 5-phosphate. Arg-164 lines the D-glyceraldehyde 3-phosphate pocket. Residues Gly-213 and 234-235 (GS) each bind D-ribose 5-phosphate.

The protein belongs to the PdxS/SNZ family. In terms of assembly, in the presence of PdxT, forms a dodecamer of heterodimers.

It carries out the reaction aldehydo-D-ribose 5-phosphate + D-glyceraldehyde 3-phosphate + L-glutamine = pyridoxal 5'-phosphate + L-glutamate + phosphate + 3 H2O + H(+). Its pathway is cofactor biosynthesis; pyridoxal 5'-phosphate biosynthesis. In terms of biological role, catalyzes the formation of pyridoxal 5'-phosphate from ribose 5-phosphate (RBP), glyceraldehyde 3-phosphate (G3P) and ammonia. The ammonia is provided by the PdxT subunit. Can also use ribulose 5-phosphate and dihydroxyacetone phosphate as substrates, resulting from enzyme-catalyzed isomerization of RBP and G3P, respectively. This is Pyridoxal 5'-phosphate synthase subunit PdxS from Desulfovibrio desulfuricans (strain ATCC 27774 / DSM 6949 / MB).